Here is a 502-residue protein sequence, read N- to C-terminus: Hippocampus abundant transcript-like protein 1 (502 aa).

Residues 1 to 12 show a composition bias toward basic and acidic residues; that stretch reads MNAEPPEEKAAS. The disordered stretch occupies residues 1 to 27; sequence MNAEPPEEKAASEAEAGAMPEKRAGSR. The Extracellular segment spans residues 1-46; the sequence is MNAEPPEEKAASEAEAGAMPEKRAGSRAAGGNSLQGFGRPSVYHAA. Residues 47–67 traverse the membrane as a helical segment; the sequence is IVIFLEFFAWGLLTTSMLTVL. Topologically, residues 68-79 are cytoplasmic; the sequence is HETFPQHTFLMN. A helical membrane pass occupies residues 80–100; sequence GLIQGVKGLLSFLSAPLIGAL. Residues 101-108 are Extracellular-facing; that stretch reads SDVWGRKP. The helical transmembrane segment at 109–129 threads the bilayer; that stretch reads FLLGTVFFTCFPIPLMRISPW. Residues 130–131 are Cytoplasmic-facing; it reads WY. A helical transmembrane segment spans residues 132–152; sequence FAMISISGVFSVTFSVIFAYV. Over 153-165 the chain is Extracellular; that stretch reads ADVTQEHERSTAY. A helical membrane pass occupies residues 166-186; the sequence is GWVSATFAASLVSSPAIGAYL. At 187 to 193 the chain is on the cytoplasmic side; the sequence is SASYGDS. The helical transmembrane segment at 194–214 threads the bilayer; that stretch reads LVVLVATVVALLDICFILLAV. Residues 215-248 are Extracellular-facing; sequence PESLPEKMRPLSWGARISWKQADPFASLKKVGKD. The chain crosses the membrane as a helical span at residues 249–269; sequence STILLICITVFLSYLPEAGQY. The Cytoplasmic portion of the chain corresponds to 270–278; that stretch reads SSFFLYLRQ. A helical transmembrane segment spans residues 279–299; that stretch reads VIGFGSIKIAAFIAMVGILSI. At 300–316 the chain is on the extracellular side; sequence VAQTVFLTSLMRSLGNK. Residues 317–337 traverse the membrane as a helical segment; that stretch reads NTVLLGLGFQMFQLAWYGFGS. Residue Gln338 is a topological domain, cytoplasmic. A helical transmembrane segment spans residues 339–359; that stretch reads AWMMWAAGIVAAVSSITFPAV. At 360–384 the chain is on the extracellular side; the sequence is STLVSQNADSNQQGVAQGIITGIRG. The chain crosses the membrane as a helical span at residues 385 to 405; sequence LCNGLGPALYGFIFYMFHVEL. Topologically, residues 406–425 are cytoplasmic; sequence TELEPELISNNAALQGAVIP. A helical membrane pass occupies residues 426 to 446; sequence GPPFLFGACIVFMSFLVAVFI. Over 447 to 502 the chain is Extracellular; that stretch reads PEYSKGGIQKHSNSISGSLANTPERGSDEDIEPLLQDSSIWELSSLEEPGHQCTEL.

It belongs to the major facilitator superfamily.

It is found in the membrane. This Bos taurus (Bovine) protein is Hippocampus abundant transcript-like protein 1.